Here is a 325-residue protein sequence, read N- to C-terminus: 2-oxoglutarate-dependent dioxygenase tropC (325 aa).

Residues 185–287 (PSIPMRLLHY…RYSVAFFLNG (103 aa)) enclose the Fe2OG dioxygenase domain. Fe cation contacts are provided by H210, D212, and H269. Residue R278 coordinates 2-oxoglutarate.

It belongs to the iron/ascorbate-dependent oxidoreductase family. It depends on Fe(2+) as a cofactor.

Its pathway is secondary metabolite biosynthesis. Its function is as follows. 2-oxoglutarate-dependent dioxygenase; part of the gene cluster that mediates the biosynthesis of the tropolone class of fungal maleic anhydrides. The pathway begins with the synthesis of 3-methylorcinaldehyde by the non-reducing polyketide synthase (PKS) tropA. 3-methylorcinaldehyde is the substrate for the FAD-dependent monooxygenase tropB to yield a dearomatized hydroxycyclohexadione. The 2-oxoglutarate-dependent dioxygenase tropC then performs the oxidative ring expansion to provide the first tropolone metabolite stipitaldehyde. Trop D converts stipitaldehyde into stipitacetal which is in turn converted to stipitalide by the short-chain dehydrogenase/reductase tropE. The next steps involve tropF, tropG, tropH, tropI and tropJ to form successive tropolone maleic anhydrides including stipitaldehydic, stipitatonic and stipitatic acids. The polypeptide is 2-oxoglutarate-dependent dioxygenase tropC (Talaromyces stipitatus (strain ATCC 10500 / CBS 375.48 / QM 6759 / NRRL 1006) (Penicillium stipitatum)).